Here is a 94-residue protein sequence, read N- to C-terminus: Co-chaperonin GroES (94 aa).

The protein belongs to the GroES chaperonin family. As to quaternary structure, heptamer of 7 subunits arranged in a ring. Interacts with the chaperonin GroEL.

It localises to the cytoplasm. In terms of biological role, together with the chaperonin GroEL, plays an essential role in assisting protein folding. The GroEL-GroES system forms a nano-cage that allows encapsulation of the non-native substrate proteins and provides a physical environment optimized to promote and accelerate protein folding. GroES binds to the apical surface of the GroEL ring, thereby capping the opening of the GroEL channel. This Lactobacillus acidophilus (strain ATCC 700396 / NCK56 / N2 / NCFM) protein is Co-chaperonin GroES.